A 423-amino-acid chain; its full sequence is Histidine--tRNA ligase 2 (423 aa).

The protein belongs to the class-II aminoacyl-tRNA synthetase family. Homodimer.

Its subcellular location is the cytoplasm. The catalysed reaction is tRNA(His) + L-histidine + ATP = L-histidyl-tRNA(His) + AMP + diphosphate + H(+). This chain is Histidine--tRNA ligase 2, found in Bacillus cereus (strain ATCC 10987 / NRS 248).